A 262-amino-acid polypeptide reads, in one-letter code: Abhydrolase domain-containing protein AKT2 (262 aa).

The Peroxisomal targeting signal type 1 signature appears at 260-262 (SKL).

Belongs to the AB hydrolase superfamily. AKT2 hydrolase family.

The protein localises to the peroxisome. Its pathway is mycotoxin biosynthesis. Functionally, abhydrolase domain-containing protein; part of the gene clusters that mediate the biosynthesis of the host-selective toxins (HSTs) AK-toxins responsible for Japanese pear black spot disease by the Japanese pear pathotype. AK-toxins are esters of 9,10-epoxy 8-hydroxy 9-methyldecatrienoic acid (EDA). On cellular level, AK-toxins affect plasma membrane of susceptible cells and cause a sudden increase in loss of K(+) after a few minutes of toxin treatment. The acyl-CoA ligase AKT1, the hydrolase AKT2 and enoyl-CoA hydratase AKT3 are all involved in the biosynthesis of the AK-, AF- and ACT-toxin common 9,10-epoxy-8-hydroxy-9-methyl-decatrienoic acid (EDA) structural moiety. Part of the EDA biosynthesis occurs in the peroxisome since these 3 enzymes are localized in peroxisomes. The exact roles of the 3 enzymes, as well as of additional AK-toxin clusters enzymes, including AKT4, AKT6 and AKTS1, have still to be elucidated. The Cytochrome P450 monooxygenase AKT7 on the other side functions to limit production of EDA and AK-toxin, probably via the catalysis of a side reaction of EDA or its precursor. This chain is Abhydrolase domain-containing protein AKT2, found in Alternaria alternata (Alternaria rot fungus).